The following is a 340-amino-acid chain: MSRKFMQVYEYDREQYLDEFIEDRYNDSFIASPEYYSAEKYMCRYTILNHNCVNVRRCALDSKLLHDIITNCKIYNNIELVRATKFVYYLDLIKCNWVSKVGDSVLYPVIFITHTSTRNLDKVSVKTYKGVKVKKLNRCADHAIVINPFVKFKLTLPNKTSHAKVLVTFCKLRTDIMPIEAPYPGNVLVYTFPDIHKRIPGYIHINIEGCIDGIIYINSSKFSCVLKLHRSMYRIPPFPIDICSCCSQYTNDDIEIPIHDLIKDVVIFKNKEMVYYLKLNNKTIARFTYFNNIDTAITQEHKYVKIALGIVCKLMINNMHSIVGVNHSNTFVNCLLEDNV.

Belongs to the orthopoxvirus B17 protein family.

The protein is Protein B17 of Variola virus (isolate Human/India/Ind3/1967) (VARV).